Consider the following 141-residue polypeptide: Small ribosomal subunit protein uS12 (141 aa).

The protein belongs to the universal ribosomal protein uS12 family. In terms of assembly, part of the 30S ribosomal subunit.

With S4 and S5 plays an important role in translational accuracy. Located at the interface of the 30S and 50S subunits. This is Small ribosomal subunit protein uS12 from Methanothermobacter thermautotrophicus (strain ATCC 29096 / DSM 1053 / JCM 10044 / NBRC 100330 / Delta H) (Methanobacterium thermoautotrophicum).